Consider the following 321-residue polypeptide: Cytochrome c biogenesis protein CcsA (321 aa).

7 helical membrane passes run 9–29 (ILTHISFSTISIVITIHLITL), 44–64 (GMIATFFSITGFLVSRWVSSG), 68–88 (LSNLYESLIFLSWTLYILHTI), 143–163 (MLLSYATLLCGSLLSAALLII), 225–245 (VISLGFTLLTVGILCGAVWAN), 259–273 (TWAFITWTIFAIYLH), and 288–308 (VASIGFLIIWICYFGINLLGI).

This sequence belongs to the CcmF/CycK/Ccl1/NrfE/CcsA family. May interact with Ccs1.

The protein resides in the plastid. It is found in the chloroplast thylakoid membrane. Required during biogenesis of c-type cytochromes (cytochrome c6 and cytochrome f) at the step of heme attachment. This is Cytochrome c biogenesis protein CcsA from Zea mays (Maize).